A 173-amino-acid chain; its full sequence is ATP-dependent protease subunit HslV (173 aa).

The active site involves Thr-2. Positions 158, 161, and 164 each coordinate Na(+).

This sequence belongs to the peptidase T1B family. HslV subfamily. As to quaternary structure, a double ring-shaped homohexamer of HslV is capped on each side by a ring-shaped HslU homohexamer. The assembly of the HslU/HslV complex is dependent on binding of ATP.

It is found in the cytoplasm. It carries out the reaction ATP-dependent cleavage of peptide bonds with broad specificity.. With respect to regulation, allosterically activated by HslU binding. Its function is as follows. Protease subunit of a proteasome-like degradation complex believed to be a general protein degrading machinery. The protein is ATP-dependent protease subunit HslV of Mannheimia haemolytica (Pasteurella haemolytica).